The sequence spans 46 residues: Viscotoxin-C1 (46 aa).

Intrachain disulfides connect Cys-3–Cys-40, Cys-4–Cys-32, and Cys-16–Cys-26.

Monomer.

Its subcellular location is the secreted. In terms of biological role, thionins are small plant proteins which are toxic to animal cells. They seem to exert their toxic effect at the level of the cell membrane. Their precise function is not known. The chain is Viscotoxin-C1 from Viscum album (European mistletoe).